A 184-amino-acid polypeptide reads, in one-letter code: MRHRLFTLVLGLAVLITAGCGFHLRGTTQVPAQLQTLVLDSSDPYGPLTRAVREQLRLSDVKIVDDATRQDIPSLRVLSSSETRDTVSIFQDGKTAEYQMVLTLQAQVLMPGEDIYPLSVTVFRTFFDNPLAALAKDAEQDIVRQEMREQAAQQLVRKLLTINGSQEVKNRLQSTDSPTAAKRS.

The first 19 residues, 1–19 (MRHRLFTLVLGLAVLITAG), serve as a signal peptide directing secretion. Residue C20 is the site of N-palmitoyl cysteine attachment. The S-diacylglycerol cysteine moiety is linked to residue C20.

The protein belongs to the LptE lipoprotein family. Component of the lipopolysaccharide transport and assembly complex. Interacts with LptD.

The protein resides in the cell outer membrane. In terms of biological role, together with LptD, is involved in the assembly of lipopolysaccharide (LPS) at the surface of the outer membrane. Required for the proper assembly of LptD. Binds LPS and may serve as the LPS recognition site at the outer membrane. This is LPS-assembly lipoprotein LptE from Pectobacterium atrosepticum (strain SCRI 1043 / ATCC BAA-672) (Erwinia carotovora subsp. atroseptica).